Consider the following 341-residue polypeptide: Limbic system-associated membrane protein (341 aa).

Positions 1–28 (MVGRVQPDRKQLPLVLLRLLCLLPTGLP) are cleaved as a signal peptide. Ig-like domains follow at residues 29–122 (VRSV…PKTS), 132–214 (PKIS…VKVT), and 219–304 (PTIT…ASLV). Residues Asn-40 and Asn-66 are each glycosylated (N-linked (GlcNAc...) asparagine). A disulfide bridge links Cys-53 with Cys-111. Tyr-94 carries the phosphotyrosine modification. N-linked (GlcNAc...) asparagine glycans are attached at residues Asn-136 and Asn-148. Intrachain disulfides connect Cys-153-Cys-197 and Cys-239-Cys-290. N-linked (GlcNAc...) asparagine glycosylation is found at Asn-279, Asn-287, and Asn-300.

It belongs to the immunoglobulin superfamily. IgLON family.

The protein localises to the cell membrane. In terms of biological role, mediates selective neuronal growth and axon targeting. Contributes to the guidance of developing axons and remodeling of mature circuits in the limbic system. Essential for normal growth of the hippocampal mossy fiber projection. This Mus musculus (Mouse) protein is Limbic system-associated membrane protein (Lsamp).